The chain runs to 166 residues: MAINLEDKKAIVAEVNEAAKAALSAVVADARGVTVSAMTGLRKEAREAGVYVRVVRNTLLKRAVADTEYSVLNDVFTGPTLIAFSTDHPGAAARLFKEFAKGQDKFEIKAAAFEGKFLAANQIDVLATLPTRNEAISQLMSVIQGATSKLARTLAAVREQKEAAAA.

Belongs to the universal ribosomal protein uL10 family. As to quaternary structure, part of the ribosomal stalk of the 50S ribosomal subunit. The N-terminus interacts with L11 and the large rRNA to form the base of the stalk. The C-terminus forms an elongated spine to which L12 dimers bind in a sequential fashion forming a multimeric L10(L12)X complex.

Forms part of the ribosomal stalk, playing a central role in the interaction of the ribosome with GTP-bound translation factors. In Pseudomonas fluorescens (strain SBW25), this protein is Large ribosomal subunit protein uL10.